A 931-amino-acid polypeptide reads, in one-letter code: Probable ubiquitin-like-specific protease 2B (931 aa).

Positions 204–224 are disordered; it reads SLSDRSALSEASDSEDDEEDW. Residues 215–224 are compositionally biased toward acidic residues; the sequence is SDSEDDEEDW. Catalysis depends on residues His-489, Asp-522, and Cys-577. The disordered stretch occupies residues 825–931; sequence HEEEIDESPP…PTGEAEEMEK (107 aa). Residues 839–851 are compositionally biased toward polar residues; that stretch reads SLKSATVGSNTAD. Positions 873-904 are enriched in basic and acidic residues; that stretch reads NDRDEEKPLEHDLEIGDKTSEDVGDDCDQKEP.

This sequence belongs to the peptidase C48 family.

Protease that catalyzes two essential functions in the SUMO pathway: processing of full-length SUMOs to their mature forms and deconjugation of SUMO from targeted proteins. This Arabidopsis thaliana (Mouse-ear cress) protein is Probable ubiquitin-like-specific protease 2B (ULP2B).